Reading from the N-terminus, the 92-residue chain is Large ribosomal subunit protein bL28 (92 aa).

Belongs to the bacterial ribosomal protein bL28 family.

This is Large ribosomal subunit protein bL28 from Borrelia duttonii (strain Ly).